The chain runs to 1268 residues: Protein transport protein Sec24B (1268 aa).

Composition is skewed to low complexity over residues 1–14 (MSAPAGSSHPAASA) and 21–48 (GGAAVSGAAAPAGPGAGPAPHQQNGPAQ). Disordered regions lie at residues 1–71 (MSAP…SGHY), 216–263 (APTV…LTWS), 303–345 (QNVQ…SVTQ), and 362–451 (NNQA…VVPQ). The residue at position 2 (Ser2) is an N-acetylserine. Position 55 is a phosphoserine (Ser55). Residues 225–234 (NSFSGQNTAI) show a composition bias toward polar residues. 3 stretches are compositionally biased toward low complexity: residues 245–255 (SQQHHQQQSLS), 311–332 (SPVVSTVLSGSSGSSSTRTPPT), and 365–375 (ASSAPTPLSST). Position 329 is a phosphothreonine (Thr329). The span at 376–389 (SDDEEEEEEDEEAG) shows a compositional bias: acidic residues. Residues 426–450 (APDPAPEPDPASAPAPASAPAPVVP) are compositionally biased toward pro residues. 4 residues coordinate Zn(2+): Cys605, Cys608, Cys626, and Cys629. The segment at 605–629 (CRSCRTYINPFVSFIDQRRWKCNLC) is zinc finger-like. Residues 1141 to 1213 (PQPPLQKLSA…TLSSERARSF (73 aa)) form a Gelsolin-like repeat. Residue Ser1224 is modified to Phosphoserine.

It belongs to the SEC23/SEC24 family. SEC24 subfamily. As to quaternary structure, COPII is composed of at least five proteins: the Sec23/24 complex, the Sec13/31 complex and SAR1. Interacts with STING1; promoting STING1 translocation to COPII vesicles in a STEEP1-dependent manner. Interacts with RNF139. Interacts with TMED2 and TMED10. Interacts with CNIH4.

The protein resides in the cytoplasmic vesicle. Its subcellular location is the COPII-coated vesicle membrane. The protein localises to the endoplasmic reticulum membrane. It localises to the cytoplasm. It is found in the cytosol. Component of the coat protein complex II (COPII) which promotes the formation of transport vesicles from the endoplasmic reticulum (ER). The coat has two main functions, the physical deformation of the endoplasmic reticulum membrane into vesicles and the selection of cargo molecules for their transport to the Golgi complex. Plays a central role in cargo selection within the COPII complex and together with SEC24A may have a different specificity compared to SEC24C and SEC24D. May package preferentially cargos with cytoplasmic DxE or LxxLE motifs and may also recognize conformational epitopes. The sequence is that of Protein transport protein Sec24B from Homo sapiens (Human).